A 261-amino-acid polypeptide reads, in one-letter code: Non-homologous end joining protein Ku 1 (261 aa).

In terms of domain architecture, Ku spans 12–171; that stretch reads SFSLVAIPVQ…LITLHYSDEV (160 aa).

Belongs to the prokaryotic Ku family. As to quaternary structure, homodimer. Interacts with LigD.

In terms of biological role, with LigD forms a non-homologous end joining (NHEJ) DNA repair enzyme, which repairs dsDNA breaks with reduced fidelity. Binds linear dsDNA with 5'- and 3'- overhangs but not closed circular dsDNA nor ssDNA. Recruits and stimulates the ligase activity of LigD. This is Non-homologous end joining protein Ku 1 from Geotalea uraniireducens (strain Rf4) (Geobacter uraniireducens).